A 125-amino-acid chain; its full sequence is uncharacterized protein (125 aa).

The protein resides in the mitochondrion. This is an uncharacterized protein from Paramecium tetraurelia.